The sequence spans 313 residues: D-alanine--D-alanine ligase (313 aa).

The region spanning 108–308 (KLVWQQTGVP…YSELVVKVLS (201 aa)) is the ATP-grasp domain. ATP is bound at residue 138-193 (VAKLGLPLFVKPASEGSSVAVLKVKTADALPAALSEAATHDKIVIVEKSIEGGGEY). Asp262, Glu275, and Asn277 together coordinate Mg(2+).

Belongs to the D-alanine--D-alanine ligase family. Requires Mg(2+) as cofactor. Mn(2+) serves as cofactor.

The protein localises to the cytoplasm. The catalysed reaction is 2 D-alanine + ATP = D-alanyl-D-alanine + ADP + phosphate + H(+). Its pathway is cell wall biogenesis; peptidoglycan biosynthesis. Cell wall formation. In Burkholderia vietnamiensis (strain G4 / LMG 22486) (Burkholderia cepacia (strain R1808)), this protein is D-alanine--D-alanine ligase.